The following is a 398-amino-acid chain: 1-deoxy-D-xylulose 5-phosphate reductoisomerase (398 aa).

NADPH contacts are provided by Thr10, Gly11, Ser12, Ile13, Gly36, Asn38, and Asn124. Lys125 is a binding site for 1-deoxy-D-xylulose 5-phosphate. Glu126 lines the NADPH pocket. Residue Asp150 participates in Mn(2+) binding. 1-deoxy-D-xylulose 5-phosphate is bound by residues Ser151, Glu152, Ser176, and His199. A Mn(2+)-binding site is contributed by Glu152. Position 205 (Gly205) interacts with NADPH. 1-deoxy-D-xylulose 5-phosphate contacts are provided by Ser212, Asn217, Lys218, and Glu221. Residue Glu221 coordinates Mn(2+).

The protein belongs to the DXR family. The cofactor is Mg(2+). Mn(2+) is required as a cofactor.

It carries out the reaction 2-C-methyl-D-erythritol 4-phosphate + NADP(+) = 1-deoxy-D-xylulose 5-phosphate + NADPH + H(+). It participates in isoprenoid biosynthesis; isopentenyl diphosphate biosynthesis via DXP pathway; isopentenyl diphosphate from 1-deoxy-D-xylulose 5-phosphate: step 1/6. Its function is as follows. Catalyzes the NADPH-dependent rearrangement and reduction of 1-deoxy-D-xylulose-5-phosphate (DXP) to 2-C-methyl-D-erythritol 4-phosphate (MEP). The chain is 1-deoxy-D-xylulose 5-phosphate reductoisomerase from Nostoc punctiforme (strain ATCC 29133 / PCC 73102).